The primary structure comprises 97 residues: Large ribosomal subunit protein uL23 (97 aa).

Belongs to the universal ribosomal protein uL23 family. Part of the 50S ribosomal subunit. Contacts protein L29, and trigger factor when it is bound to the ribosome.

Functionally, one of the early assembly proteins it binds 23S rRNA. One of the proteins that surrounds the polypeptide exit tunnel on the outside of the ribosome. Forms the main docking site for trigger factor binding to the ribosome. In Clostridium perfringens (strain SM101 / Type A), this protein is Large ribosomal subunit protein uL23.